The sequence spans 227 residues: ATP synthase F(0) complex subunit a (227 aa).

The next 6 membrane-spanning stretches (helical) occupy residues 12–32 (PYLM…LLFP), 69–89 (WALL…MGLL), 98–118 (QLSM…LIGL), 139–159 (IPIL…ALGV), 170–190 (LLIQ…PSIS), and 196–216 (ILLL…YVFV).

This sequence belongs to the ATPase A chain family. Component of the ATP synthase complex composed at least of ATP5F1A/subunit alpha, ATP5F1B/subunit beta, ATP5MC1/subunit c (homooctomer), MT-ATP6/subunit a, MT-ATP8/subunit 8, ATP5ME/subunit e, ATP5MF/subunit f, ATP5MG/subunit g, ATP5MK/subunit k, ATP5MJ/subunit j, ATP5F1C/subunit gamma, ATP5F1D/subunit delta, ATP5F1E/subunit epsilon, ATP5PF/subunit F6, ATP5PB/subunit b, ATP5PD/subunit d, ATP5PO/subunit OSCP. ATP synthase complex consists of a soluble F(1) head domain (subunits alpha(3) and beta(3)) - the catalytic core - and a membrane F(0) domain - the membrane proton channel (subunits c, a, 8, e, f, g, k and j). These two domains are linked by a central stalk (subunits gamma, delta, and epsilon) rotating inside the F1 region and a stationary peripheral stalk (subunits F6, b, d, and OSCP). Interacts with DNAJC30; interaction is direct.

The protein resides in the mitochondrion inner membrane. It carries out the reaction H(+)(in) = H(+)(out). In terms of biological role, subunit a, of the mitochondrial membrane ATP synthase complex (F(1)F(0) ATP synthase or Complex V) that produces ATP from ADP in the presence of a proton gradient across the membrane which is generated by electron transport complexes of the respiratory chain. ATP synthase complex consist of a soluble F(1) head domain - the catalytic core - and a membrane F(1) domain - the membrane proton channel. These two domains are linked by a central stalk rotating inside the F(1) region and a stationary peripheral stalk. During catalysis, ATP synthesis in the catalytic domain of F(1) is coupled via a rotary mechanism of the central stalk subunits to proton translocation. With the subunit c (ATP5MC1), forms the proton-conducting channel in the F(0) domain, that contains two crucial half-channels (inlet and outlet) that facilitate proton movement from the mitochondrial intermembrane space (IMS) into the matrix. Protons are taken up via the inlet half-channel and released through the outlet half-channel, following a Grotthuss mechanism. The protein is ATP synthase F(0) complex subunit a of Coturnix japonica (Japanese quail).